Reading from the N-terminus, the 85-residue chain is Large ribosomal subunit protein bL27 (85 aa).

Positions 1 to 20 are disordered; sequence MAHKKAGGSTRNGRDSESKR.

The protein belongs to the bacterial ribosomal protein bL27 family.

This is Large ribosomal subunit protein bL27 from Yersinia pseudotuberculosis serotype O:1b (strain IP 31758).